The primary structure comprises 650 residues: Protein kinase domain-containing protein ppk38 (650 aa).

Residues 33–315 (VTVKRYLAEG…MRNVPIHIYD (283 aa)) form the Protein kinase domain. Disordered regions lie at residues 344–442 (IHQS…PTTP), 517–571 (KVAA…PTNM), and 591–616 (RRVS…EKPM). Composition is skewed to polar residues over residues 369-415 (NVNS…NFRV) and 533-554 (SVEN…SSNA).

The polypeptide is Protein kinase domain-containing protein ppk38 (ppk38) (Schizosaccharomyces pombe (strain 972 / ATCC 24843) (Fission yeast)).